The primary structure comprises 369 residues: Flagellar P-ring protein 2 (369 aa).

The signal sequence occupies residues 1-24; it reads MCAFAAILSLLSVLLMATSRSSDA.

Belongs to the FlgI family. In terms of assembly, the basal body constitutes a major portion of the flagellar organelle and consists of four rings (L,P,S, and M) mounted on a central rod.

The protein resides in the periplasm. It is found in the bacterial flagellum basal body. Functionally, assembles around the rod to form the L-ring and probably protects the motor/basal body from shearing forces during rotation. This is Flagellar P-ring protein 2 from Burkholderia thailandensis (strain ATCC 700388 / DSM 13276 / CCUG 48851 / CIP 106301 / E264).